We begin with the raw amino-acid sequence, 492 residues long: Fumarate hydratase 1, mitochondrial (492 aa).

The N-terminal 28 residues, 1–28 (MSIYVASRRLSGGTTVTALRYATSLRSY), are a transit peptide targeting the mitochondrion. Residues 127–129 (SGT), 157–160 (HPND), 167–169 (SSN), and Thr-215 contribute to the substrate site. Residue His-216 is the Proton donor/acceptor of the active site. Residue Ser-346 is part of the active site. Residues Ser-347 and 352–354 (KVN) contribute to the substrate site.

This sequence belongs to the class-II fumarase/aspartase family. Fumarase subfamily. Homotetramer.

It is found in the mitochondrion. It carries out the reaction (S)-malate = fumarate + H2O. The protein operates within carbohydrate metabolism; tricarboxylic acid cycle; (S)-malate from fumarate: step 1/1. Its activity is regulated as follows. Fumarate hydratase activity (fumarate to L-malate) is strongly inhibited by phosphoenolpyruvate, citrate, oxaloacetate, ATP and ADP. Malate dehydratase activity (malate to fumarate) is activated by oxaloacetate, pyruvate, Asn and Gln. Malate dehydratase activity (malate to fumarate) is inhibited by citrate, succinate, ADP, ATP, glucose-6P and phosphoenolpyruvate. In terms of biological role, catalyzes the reversible stereospecific interconversion of fumarate to L-malate. Catalyzes the hydration of fumarate to L-malate in the tricarboxylic acid (TCA) cycle to facilitate a transition step in the production of energy in the form of NADH. This is Fumarate hydratase 1, mitochondrial from Arabidopsis thaliana (Mouse-ear cress).